The following is a 229-amino-acid chain: NAD(P)H-hydrate epimerase (229 aa).

One can recognise a YjeF N-terminal domain in the interval 11–222 (YAAADIRAAE…DVGLDLSGAT (212 aa)). Residue 59–63 (NNGGD) coordinates (6S)-NADPHX. Asn60 and Asp124 together coordinate K(+). Residues 128 to 136 (GIGTTASPA) and Asp164 contribute to the (6S)-NADPHX site. Ser167 contacts K(+).

This sequence belongs to the NnrE/AIBP family. K(+) is required as a cofactor.

It carries out the reaction (6R)-NADHX = (6S)-NADHX. The enzyme catalyses (6R)-NADPHX = (6S)-NADPHX. In terms of biological role, catalyzes the epimerization of the S- and R-forms of NAD(P)HX, a damaged form of NAD(P)H that is a result of enzymatic or heat-dependent hydration. This is a prerequisite for the S-specific NAD(P)H-hydrate dehydratase to allow the repair of both epimers of NAD(P)HX. The sequence is that of NAD(P)H-hydrate epimerase from Clavibacter sepedonicus (Clavibacter michiganensis subsp. sepedonicus).